Here is a 727-residue protein sequence, read N- to C-terminus: Elongation factor 2 (727 aa).

The region spanning 19–260 (DQIRNMGICA…MAIKHLPNPL (242 aa)) is the tr-type G domain. GTP is bound by residues 28 to 35 (AHIDHGKT), 94 to 98 (DTPGH), and 148 to 151 (NKVD). H603 bears the Diphthamide mark.

It belongs to the TRAFAC class translation factor GTPase superfamily. Classic translation factor GTPase family. EF-G/EF-2 subfamily.

It localises to the cytoplasm. Its function is as follows. Catalyzes the GTP-dependent ribosomal translocation step during translation elongation. During this step, the ribosome changes from the pre-translocational (PRE) to the post-translocational (POST) state as the newly formed A-site-bound peptidyl-tRNA and P-site-bound deacylated tRNA move to the P and E sites, respectively. Catalyzes the coordinated movement of the two tRNA molecules, the mRNA and conformational changes in the ribosome. This is Elongation factor 2 from Methanococcus maripaludis (strain C7 / ATCC BAA-1331).